A 664-amino-acid polypeptide reads, in one-letter code: DNA ligase (664 aa).

NAD(+) contacts are provided by residues Asp-34–Asp-38, Ser-83–Leu-84, and Glu-114. The active-site N6-AMP-lysine intermediate is Lys-116. Residues Arg-137, Glu-172, Lys-288, and Lys-312 each contribute to the NAD(+) site. Cys-406, Cys-409, Cys-424, and Cys-429 together coordinate Zn(2+). The BRCT domain maps to Val-586 to Ser-664.

It belongs to the NAD-dependent DNA ligase family. LigA subfamily. Mg(2+) is required as a cofactor. The cofactor is Mn(2+).

The catalysed reaction is NAD(+) + (deoxyribonucleotide)n-3'-hydroxyl + 5'-phospho-(deoxyribonucleotide)m = (deoxyribonucleotide)n+m + AMP + beta-nicotinamide D-nucleotide.. DNA ligase that catalyzes the formation of phosphodiester linkages between 5'-phosphoryl and 3'-hydroxyl groups in double-stranded DNA using NAD as a coenzyme and as the energy source for the reaction. It is essential for DNA replication and repair of damaged DNA. This is DNA ligase from Carboxydothermus hydrogenoformans (strain ATCC BAA-161 / DSM 6008 / Z-2901).